A 231-amino-acid polypeptide reads, in one-letter code: Octanoyltransferase (231 aa).

In terms of domain architecture, BPL/LPL catalytic spans 29–231 (PQDPDLLWLC…GRQLCIWLAP (203 aa)). Substrate is bound by residues 68–75 (RGGQVTFH), 164–166 (ALG), and 177–179 (GVA). Cys195 (acyl-thioester intermediate) is an active-site residue.

This sequence belongs to the LipB family.

It is found in the cytoplasm. It carries out the reaction octanoyl-[ACP] + L-lysyl-[protein] = N(6)-octanoyl-L-lysyl-[protein] + holo-[ACP] + H(+). The protein operates within protein modification; protein lipoylation via endogenous pathway; protein N(6)-(lipoyl)lysine from octanoyl-[acyl-carrier-protein]: step 1/2. In terms of biological role, catalyzes the transfer of endogenously produced octanoic acid from octanoyl-acyl-carrier-protein onto the lipoyl domains of lipoate-dependent enzymes. Lipoyl-ACP can also act as a substrate although octanoyl-ACP is likely to be the physiological substrate. The protein is Octanoyltransferase of Verminephrobacter eiseniae (strain EF01-2).